A 297-amino-acid chain; its full sequence is Protease HtpX homolog (297 aa).

A run of 2 helical transmembrane segments spans residues 14–34 (VILL…AGYL) and 39–59 (YQLG…SMIF). His143 contacts Zn(2+). The active site involves Glu144. His147 is a binding site for Zn(2+). Transmembrane regions (helical) follow at residues 158-178 (IAVA…RMMW) and 193-213 (GFGA…PLAA). Zn(2+) is bound at residue Glu225.

This sequence belongs to the peptidase M48B family. Requires Zn(2+) as cofactor.

It localises to the cell membrane. The chain is Protease HtpX homolog from Streptococcus equi subsp. zooepidemicus (strain MGCS10565).